A 96-amino-acid chain; its full sequence is Co-chaperonin GroES (96 aa).

The protein belongs to the GroES chaperonin family. As to quaternary structure, heptamer of 7 subunits arranged in a ring. Interacts with the chaperonin GroEL.

It localises to the cytoplasm. In terms of biological role, together with the chaperonin GroEL, plays an essential role in assisting protein folding. The GroEL-GroES system forms a nano-cage that allows encapsulation of the non-native substrate proteins and provides a physical environment optimized to promote and accelerate protein folding. GroES binds to the apical surface of the GroEL ring, thereby capping the opening of the GroEL channel. This Actinobacillus succinogenes (strain ATCC 55618 / DSM 22257 / CCUG 43843 / 130Z) protein is Co-chaperonin GroES.